The chain runs to 391 residues: Formate-dependent phosphoribosylglycinamide formyltransferase (391 aa).

Residues 20–21 (EL) and glutamate 80 contribute to the N(1)-(5-phospho-beta-D-ribosyl)glycinamide site. ATP is bound by residues arginine 112, lysine 153, 158–163 (SSGKGQ), 193–196 (EGFI), and glutamate 201. One can recognise an ATP-grasp domain in the interval 117–306 (RLAAETLGLP…EFALHVRAIL (190 aa)). Residues glutamate 265 and glutamate 277 each coordinate Mg(2+). Residues aspartate 284, lysine 354, and 361–362 (RR) each bind N(1)-(5-phospho-beta-D-ribosyl)glycinamide.

The protein belongs to the PurK/PurT family. As to quaternary structure, homodimer.

The enzyme catalyses N(1)-(5-phospho-beta-D-ribosyl)glycinamide + formate + ATP = N(2)-formyl-N(1)-(5-phospho-beta-D-ribosyl)glycinamide + ADP + phosphate + H(+). Its pathway is purine metabolism; IMP biosynthesis via de novo pathway; N(2)-formyl-N(1)-(5-phospho-D-ribosyl)glycinamide from N(1)-(5-phospho-D-ribosyl)glycinamide (formate route): step 1/1. Its function is as follows. Involved in the de novo purine biosynthesis. Catalyzes the transfer of formate to 5-phospho-ribosyl-glycinamide (GAR), producing 5-phospho-ribosyl-N-formylglycinamide (FGAR). Formate is provided by PurU via hydrolysis of 10-formyl-tetrahydrofolate. The protein is Formate-dependent phosphoribosylglycinamide formyltransferase of Shewanella oneidensis (strain ATCC 700550 / JCM 31522 / CIP 106686 / LMG 19005 / NCIMB 14063 / MR-1).